The chain runs to 281 residues: MKVLHTVAEFRQARAAFDVLGFVPTMGYLHQGHLALVEQARRECPAVAVSIFVNPTQFGPNEDYARYPRDTNRDLALLEAAGVDLVFIPSVEEMYPPGFGTYVIQPAADEVLEGAARPGHFRGVATVVCKLFNIVQPTKSYFGQKDAQQTVVVRQMVRDLNLPVEIVIVPTVREPDGLALSSRNVYLNAEQRAAAPVLYRALRTAAERYAAGERDAETLRAVMRSVLAGEPLARPDYVSVAHPLTLRELDRIGADGALLSMAVRFDQVRLIDNWLLEGEGK.

26-33 (MGYLHQGH) is a binding site for ATP. Catalysis depends on His33, which acts as the Proton donor. Position 57 (Gln57) interacts with (R)-pantoate. Position 57 (Gln57) interacts with beta-alanine. 143 to 146 (GQKD) serves as a coordination point for ATP. Gln149 lines the (R)-pantoate pocket. Residues Val172 and 180-183 (LSSR) each bind ATP.

It belongs to the pantothenate synthetase family. As to quaternary structure, homodimer.

It is found in the cytoplasm. It carries out the reaction (R)-pantoate + beta-alanine + ATP = (R)-pantothenate + AMP + diphosphate + H(+). The protein operates within cofactor biosynthesis; (R)-pantothenate biosynthesis; (R)-pantothenate from (R)-pantoate and beta-alanine: step 1/1. Its function is as follows. Catalyzes the condensation of pantoate with beta-alanine in an ATP-dependent reaction via a pantoyl-adenylate intermediate. The chain is Pantothenate synthetase from Chloroflexus aurantiacus (strain ATCC 29366 / DSM 635 / J-10-fl).